A 447-amino-acid chain; its full sequence is UPF0210 protein LSEI_0897 (447 aa).

It belongs to the UPF0210 family. As to quaternary structure, homodimer.

The polypeptide is UPF0210 protein LSEI_0897 (Lacticaseibacillus paracasei (strain ATCC 334 / BCRC 17002 / CCUG 31169 / CIP 107868 / KCTC 3260 / NRRL B-441) (Lactobacillus paracasei)).